The sequence spans 154 residues: 17.0 kDa class II heat shock protein (154 aa).

A sHSP domain is found at 39-154 (DARAMAATPA…KPKTIEIKVA (116 aa)).

This sequence belongs to the small heat shock protein (HSP20) family.

The protein localises to the cytoplasm. This chain is 17.0 kDa class II heat shock protein (HSP18), found in Zea mays (Maize).